The chain runs to 231 residues: MGNSVMEKIKGGLVVSCQALEDEPLHSAFIMSKMALAAVQGGAVGIRANTAKDIRAIQSEIDVPIIGIYKKDYDDSDVFITPTLKEVREICETGVEIVAMDATTRKRPHNEDLKDILNAIRKEFPNTLFMADTGSIEDVYYADSLGFDLIGTTLYGYTEETANKNISDDDFSHLKEVLKSTKRPVIAEGKIDSPSKARQVLTLGCYAVVVGGAVTRPQEITTRFTNEIKKI.

It belongs to the NanE family.

The enzyme catalyses an N-acyl-D-glucosamine 6-phosphate = an N-acyl-D-mannosamine 6-phosphate. The protein operates within amino-sugar metabolism; N-acetylneuraminate degradation; D-fructose 6-phosphate from N-acetylneuraminate: step 3/5. Functionally, converts N-acetylmannosamine-6-phosphate (ManNAc-6-P) to N-acetylglucosamine-6-phosphate (GlcNAc-6-P). The chain is Putative N-acetylmannosamine-6-phosphate 2-epimerase from Listeria monocytogenes serotype 4b (strain CLIP80459).